The chain runs to 578 residues: Glycosyltransferase family 92 protein RCOM_0530710 (578 aa).

The helical transmembrane segment at 21–43 (SFFSVRSLTACLSFFVFLLFISS) threads the bilayer. The GT92 domain maps to 295–531 (YELCACTMLW…QNQGSKDRAP (237 aa)).

This sequence belongs to the glycosyltransferase 92 family.

It localises to the membrane. This chain is Glycosyltransferase family 92 protein RCOM_0530710, found in Ricinus communis (Castor bean).